The primary structure comprises 169 residues: MKGSRIELGDVTPHNIKQLKRLNQVIFPVSYNDKFYKDVLEVGELAKLAYFNDIAVGAVCCRVDHSQNQKRLYIMTLGCLAPYRRLGIGTKMLNHVLNICEKDGTFDNIYLHVQISNESAIDFYRKFGFEIIETKKNYYKRIEPADAHVLQKNLKVPSGQNAETQKTDN.

Residues 6 to 155 enclose the N-acetyltransferase domain; sequence IELGDVTPHN…DAHVLQKNLK (150 aa). Thr-12 carries the phosphothreonine modification. Tyr-31 provides a ligand contact to substrate. An N6-acetyllysine mark is found at Lys-34 and Lys-37. The active site involves Tyr-73. Met-75 is a binding site for substrate. Residue 77 to 90 coordinates acetyl-CoA; the sequence is LGCLAPYRRLGIGT. Phosphotyrosine is present on Tyr-110. His-112 is a catalytic residue. 117 to 126 is a binding site for CoA; the sequence is NESAIDFYRK. Residues 138–141 form a substrate region; sequence YYKR. Lys-140 bears the N6-acetyllysine mark.

The protein belongs to the acetyltransferase family. GNAT subfamily. As to quaternary structure, component of the N-terminal acetyltransferase E (NatE) complex at least composed of NAA10, NAA15 and NAA50. Interacts with NAA10. Interacts with NAA15. Predominantly interacts with NAA15 in the N-terminal acetyltransferase A complex (NatA complex); the interactions reduce the acetylation activity of the NatA complex. Component of the N-terminal acetyltransferase E (NatE)/HYPK complex at least composed of NAA10, NAA15, NAA50 and HYPK. Within the complex interacts with NAA15. Its capacity to interact with the NatA complex is reduced by HYPK. Interacts with NAA35.

The protein localises to the cytoplasm. It localises to the nucleus. It catalyses the reaction N-terminal L-methionyl-L-alanyl-[protein] + acetyl-CoA = N-terminal N(alpha)-acetyl-L-methionyl-L-alanyl-[protein] + CoA + H(+). The catalysed reaction is N-terminal L-methionyl-L-seryl-[protein] + acetyl-CoA = N-terminal N(alpha)-acetyl-L-methionyl-L-seryl-[protein] + CoA + H(+). It carries out the reaction N-terminal L-methionyl-L-valyl-[protein] + acetyl-CoA = N-terminal N(alpha)-acetyl-L-methionyl-L-valyl-[protein] + CoA + H(+). The enzyme catalyses N-terminal L-methionyl-L-threonyl-[protein] + acetyl-CoA = N-terminal N(alpha)-acetyl-L-methionyl-L-threonyl-[protein] + CoA + H(+). It catalyses the reaction N-terminal L-methionyl-L-lysyl-[protein] + acetyl-CoA = N-terminal N(alpha)-acetyl-L-methionyl-L-lysyl-[protein] + CoA + H(+). The catalysed reaction is N-terminal L-methionyl-L-leucyl-[protein] + acetyl-CoA = N-terminal N(alpha)-acetyl-L-methionyl-L-leucyl-[protein] + CoA + H(+). It carries out the reaction N-terminal L-methionyl-L-phenylalanyl-[protein] + acetyl-CoA = N-terminal N(alpha)-acetyl-L-methionyl-L-phenylalanyl-[protein] + CoA + H(+). The enzyme catalyses N-terminal L-methionyl-L-tyrosyl-[protein] + acetyl-CoA = N-terminal N(alpha)-acetyl-L-methionyl-L-tyrosyl-[protein] + CoA + H(+). N-alpha-acetyltransferase that acetylates the N-terminus of proteins that retain their initiating methionine. Has a broad substrate specificity: able to acetylate the initiator methionine of most peptides, except for those with a proline in second position. Also displays N-epsilon-acetyltransferase activity by mediating acetylation of the side chain of specific lysines on proteins. Autoacetylates in vivo. The relevance of N-epsilon-acetyltransferase activity is however unclear: able to acetylate H4 in vitro, but this result has not been confirmed in vivo. Component of N-alpha-acetyltransferase complexes containing NAA10 and NAA15, which has N-alpha-acetyltransferase activity. Does not influence the acetyltransferase activity of NAA10. However, it negatively regulates the N-alpha-acetyltransferase activity of the N-terminal acetyltransferase A complex (also called the NatA complex). The multiprotein complexes probably constitute the major contributor for N-terminal acetylation at the ribosome exit tunnel, with NAA10 acetylating all amino termini that are devoid of methionine and NAA50 acetylating other peptides. Required for sister chromatid cohesion during mitosis by promoting binding of CDCA5/sororin to cohesin: may act by counteracting the function of NAA10. The protein is N-alpha-acetyltransferase 50 of Mus musculus (Mouse).